A 703-amino-acid chain; its full sequence is MERSESVDEDVQASAYLENDEVRERDDPMSDTLRIGEEALVCSSEHEIDVGFCQNEERKSEEETMGGFDEQSGLLVDERKEFDAPAVGMEFESYDDAYNYYNCYASEVGFRVRVKNSWFKRRSKEKYGAVLCCSSQGFKRINDVNRVRKETRTGCPAMIRMRQVDSKRWRVVEVTLDHNHLLGCKLYKSVKRKRKCVSSPVSDAKTIKLYRACVVDNGSNVNPNSTLNKKFQNSTGSPDLLNLKRGDSAAIYNYFCRMQLTNPNFFYLMDVNDEGQLRNVFWADAFSKVSCSYFGDVIFIDSSYISGKFEIPLVTFTGVNHHGKTTLLSCGFLAGETMESYHWLLKVWLSVMKRSPQTIVTDRCKPLEAAISQVFPRSHQRFSLTHIMRKIPEKLGGLHNYDAVRKAFTKAVYETLKVVEFEAAWGFMVHNFGVIENEWLRSLYEERAKWAPVYLKDTFFAGIAAAHPGETLKPFFERYVHKQTPLKEFLDKYELALQKKHREETLSDIESQTLNTAELKTKCSFETQLSRIYTRDMFKKFQIEVEEMYSCFSTTQVHVDGPFVIFLVKERVRGESSRREIRDFEVLYNRSVGEVRCICSCFNFYGYLCRHALCVLNFNGVEEIPLRYILPRWRKDYKRLHFADNGLTGFVDGTDRVQWFDQLYKNSLQVVEEGAVSLDHYKVAMQVLQESLDKVHSVEEKQD.

The disordered stretch occupies residues 1-29; sequence MERSESVDEDVQASAYLENDEVRERDDPM. Residues 99 to 184 enclose the FAR1 domain; that stretch reads NYYNCYASEV…TLDHNHLLGC (86 aa). The MULE domain maps to 297–392; sequence VIFIDSSYIS…SLTHIMRKIP (96 aa). An SWIM-type zinc finger spans residues 584–620; sequence FEVLYNRSVGEVRCICSCFNFYGYLCRHALCVLNFNG.

This sequence belongs to the FHY3/FAR1 family. Expressed in hypocotyls, rosette and cauline leaves, inflorescences stems, flowers and siliques.

The protein localises to the nucleus. Putative transcription activator involved in regulating light control of development. May have a role in controlling flowering time. The chain is Protein FAR1-RELATED SEQUENCE 6 (FRS6) from Arabidopsis thaliana (Mouse-ear cress).